The sequence spans 27 residues: Secretin (27 aa).

A Valine amide modification is found at V27.

Belongs to the glucagon family.

Its subcellular location is the secreted. Hormone involved in different processes, such as regulation of the pH of the duodenal content, food intake and water homeostasis. Exerts its biological effects by binding to secretin receptor (SCTR), a G-protein coupled receptor expressed in the basolateral domain of several cells. Acts as a key gastrointestinal hormone by regulating the pH of the duodenal content. Secreted by S cells of the duodenum in the crypts of Lieberkuehn and regulates the pH of the duodenum by (1) inhibiting the secretion of gastric acid from the parietal cells of the stomach and (2) stimulating the production of bicarbonate (NaHCO(3)) from the ductal cells of the pancreas. Production of bicarbonate is essential to neutralize the pH and ensure no damage is done to the small intestine by the gastric acid. In addition to regulating the pH of the duodenal content, plays a central role in diet induced thermogenesis: acts as a non-sympathetic brown fat (BAT) activator mediating prandial thermogenesis, which consequentially induces satiation. Mechanistically, secretin released by the gut after a meal binds to secretin receptor (SCTR) in brown adipocytes, activating brown fat thermogenesis by stimulating lipolysis, which is sensed in the brain and promotes satiation. Also able to stimulate lipolysis in white adipocytes. Also plays an important role in cellular osmoregulation: released into the systemic circulation in response to hyperosmolality and acts at different levels in the hypothalamus, pituitary and kidney to regulate water homeostasis. Also plays a role in the central nervous system, possibly by acting as a neuropeptide hormone: required for hippocampal synaptic function and neural progenitor cells maintenance. This chain is Secretin, found in Canis lupus familiaris (Dog).